The following is a 395-amino-acid chain: Multidrug resistance protein MdtL (395 aa).

12 helical membrane passes run 4 to 24, 42 to 62, 69 to 89, 93 to 113, 131 to 151, 158 to 178, 217 to 237, 247 to 267, 271 to 291, 295 to 315, 333 to 353, and 358 to 378; these read FLLC…MYLV, IAFS…GKIA, PVAI…SRAS, LFLS…VVAF, LLNG…HLIM, SLFY…LFIL, VSVI…VMGF, ALTA…LGLF, TLML…SLAH, VTLF…GVAM, LGIA…ILGI, and MLIG…FSVA.

This sequence belongs to the major facilitator superfamily. DHA1 family. MdtL (TC 2.A.1.2.22) subfamily.

It is found in the cell inner membrane. The polypeptide is Multidrug resistance protein MdtL (Salmonella heidelberg (strain SL476)).